The chain runs to 1463 residues: Alpha-agarase (1463 aa).

An N-terminal signal peptide occupies residues 1 to 27 (MITSSKKIVSAMLSTSLWIGVASAAYA). Positions 28–684 (ETTNVEAEGY…PSTLSESIFT (657 aa)) are excised as a propeptide. Disordered regions lie at residues 166 to 191 (VTPENPDNPDNPDNPDDGNTGQPGTP) and 512 to 549 (TDDIDQCANTPSGETANATGCSSSQEGGGTDPDTPQPG). A compositionally biased stretch (polar residues) spans 518 to 536 (CANTPSGETANATGCSSSQ). In terms of domain architecture, PA14 spans 534 to 677 (SSQEGGGTDP…GGTNFVHPST (144 aa)). The CBM6 domain occupies 701 to 832 (IIVELESFVF…QWSGDRVRFT (132 aa)).

The protein belongs to the glycosyl hydrolase 96 family. Monomer. Ca(2+) serves as cofactor.

It catalyses the reaction Endohydrolysis of 1,3-alpha-L-galactosidic linkages in agarose, yielding agarotetraose as the major product.. Its function is as follows. Alpha-agarase. Hydrolyzes agarose, agarohexaose, neoagarohexaose and porphyran. Hydrolysis of porphyran by this enzyme improves its antioxidant activity. Does not hydrolyze kappa-carrageenan, iota-carrageenen or lambda-carrageenan. This is Alpha-agarase from Thalassotalea agarivorans (Thalassomonas agarivorans).